A 521-amino-acid chain; its full sequence is GMP synthase [glutamine-hydrolyzing] (521 aa).

Positions 8–203 (KILILDFGAQ…VVDICGCQTL (196 aa)) constitute a Glutamine amidotransferase type-1 domain. C85 (nucleophile) is an active-site residue. Residues H177 and E179 contribute to the active site. The GMPS ATP-PPase domain maps to 204–396 (WTAANIIDDQ…LGLPRTMVYR (193 aa)). 231–237 (SGGVDSS) is an ATP binding site.

Homodimer.

It catalyses the reaction XMP + L-glutamine + ATP + H2O = GMP + L-glutamate + AMP + diphosphate + 2 H(+). It functions in the pathway purine metabolism; GMP biosynthesis; GMP from XMP (L-Gln route): step 1/1. In terms of biological role, catalyzes the synthesis of GMP from XMP. This Xanthomonas oryzae pv. oryzae (strain PXO99A) protein is GMP synthase [glutamine-hydrolyzing].